The primary structure comprises 427 residues: Mitochondrial distribution and morphology protein 10 (427 aa).

Low complexity predominate over residues 393 to 414; the sequence is SSYANSQATAGAQGSSGGPPTS. The segment at 393-427 is disordered; that stretch reads SSYANSQATAGAQGSSGGPPTSYWRGVGVSVSYSS.

It belongs to the MDM10 family. In terms of assembly, component of the ER-mitochondria encounter structure (ERMES) or MDM complex, composed of mmm1, mdm10, mdm12 and mdm34. Associates with the mitochondrial outer membrane sorting assembly machinery SAM(core) complex.

The protein localises to the mitochondrion outer membrane. Its function is as follows. Component of the ERMES/MDM complex, which serves as a molecular tether to connect the endoplasmic reticulum and mitochondria. Components of this complex are involved in the control of mitochondrial shape and protein biogenesis and may function in phospholipid exchange. mdm10 is involved in the late assembly steps of the general translocase of the mitochondrial outer membrane (TOM complex). Functions in the tom40-specific route of the assembly of outer membrane beta-barrel proteins, including the association of tom40 with the receptor tom22 and small TOM proteins. Can associate with the SAM(core) complex as well as the mdm12-mmm1 complex, both involved in late steps of the major beta-barrel assembly pathway, that is responsible for biogenesis of all outer membrane beta-barrel proteins. May act as a switch that shuttles between both complexes and channels precursor proteins into the tom40-specific pathway. Plays a role in mitochondrial morphology and in the inheritance of mitochondria. The sequence is that of Mitochondrial distribution and morphology protein 10 (mdmB) from Emericella nidulans (strain FGSC A4 / ATCC 38163 / CBS 112.46 / NRRL 194 / M139) (Aspergillus nidulans).